The sequence spans 193 residues: Penicillin-binding protein activator LpoB (193 aa).

Positions methionine 1–glycine 16 are cleaved as a signal peptide. The N-palmitoyl cysteine moiety is linked to residue cysteine 17. Cysteine 17 carries the S-diacylglycerol cysteine lipid modification. Positions cysteine 17 to lysine 55 are disordered. Low complexity predominate over residues proline 28–threonine 41.

Belongs to the LpoB family. Interacts with PBP1b.

It is found in the cell outer membrane. Regulator of peptidoglycan synthesis that is essential for the function of penicillin-binding protein 1B (PBP1b). This chain is Penicillin-binding protein activator LpoB, found in Pectobacterium carotovorum subsp. carotovorum (strain PC1).